Reading from the N-terminus, the 106-residue chain is Glycine/glutamate-rich protein sgp1 (106 aa).

The signal sequence occupies residues 1 to 20 (MKYSLIFILTLACLIASSLA). The disordered stretch occupies residues 20 to 66 (ARPEGEEKPADDAAGDKKEEGAEGDKTAAGGDEGFTGGDGKNAGGAG). Over residues 22-45 (PEGEEKPADDAAGDKKEEGAEGDK) the composition is skewed to basic and acidic residues. A compositionally biased stretch (gly residues) spans 50 to 66 (GDEGFTGGDGKNAGGAG).

It is found in the secreted. The sequence is that of Glycine/glutamate-rich protein sgp1 (sgp1) from Glossina morsitans morsitans (Savannah tsetse fly).